The chain runs to 541 residues: MAAAIRIRAVAAGARLSVLNCGLGITTRGLCSQPVSVKERIDNKRHAALLGGGQRRIDAQHKRGKLTARERISLLLDPGSFMESDMFVEHRCADFGMAADKNKFPGDSVVTGRGRINGRLVYVFSQDFTVFGGSLSGAHAQKICKIMDQAITVGAPVIGLNDSGGARIQEGVESLAGYADIFLRNVTASGVIPQISLIMGPCAGGAVYSPALTDFTFMVKDTSYLFITGPEVVKSVTNEDVTQEQLGGAKTHTTVSGVAHRAFDNDVDALCNLREFFNFLPLSSQDPAPIRECHDPSDRLVPELDTVVPLESSKAYNMLDIIHAVIDEREFFEIMPSYAKNIVVGFARMNGRTVGIVGNQPNVASGCLDINSSVKGARFVRFCDAFNIPLITFVDVPGFLPGTAQEYGGIIRHGAKLLYAFAEATVPKITVITRKAYGGAYDVMSSKHLLGDTNYAWPTAEIAVMGAKGAVEIIFKGHQDVEAAQAEYVEKFANPFPAAVRGFVDDIIQPSSTRARICCDLEVLASKKVHRPWRKHANIPL.

The transit peptide at 1 to 28 directs the protein to the mitochondrion; the sequence is MAAAIRIRAVAAGARLSVLNCGLGITTR. Positions 34–292 constitute a CoA carboxyltransferase N-terminal domain; it reads PVSVKERIDN…SSQDPAPIRE (259 aa). The interval 34–535 is carboxyltransferase; it reads PVSVKERIDN…SKKVHRPWRK (502 aa). S73 carries the phosphoserine modification. Residue K101 is modified to N6-acetyllysine; alternate. Residue K101 is modified to N6-succinyllysine; alternate. The residue at position 250 (K250) is an N6-succinyllysine. The CoA carboxyltransferase C-terminal domain occupies 296-535; the sequence is PSDRLVPELD…SKKVHRPWRK (240 aa). Residues 327-360 are acyl-CoA binding; that stretch reads DEREFFEIMPSYAKNIVVGFARMNGRTVGIVGNQ. 2 positions are modified to N6-acetyllysine; alternate: K476 and K491. N6-succinyllysine; alternate occurs at positions 476 and 491.

Belongs to the AccD/PCCB family. In terms of assembly, the holoenzyme is a dodecamer composed of 6 PCCA/alpha subunits and 6 PCCB/beta subunits. In terms of tissue distribution, broadly expressed. Most abundantly expressed in the kidney, liver, small intestine and stomach.

It is found in the mitochondrion matrix. The catalysed reaction is propanoyl-CoA + hydrogencarbonate + ATP = (S)-methylmalonyl-CoA + ADP + phosphate + H(+). It catalyses the reaction butanoyl-CoA + hydrogencarbonate + ATP = (2S)-ethylmalonyl-CoA + ADP + phosphate + H(+). It participates in metabolic intermediate metabolism; propanoyl-CoA degradation; succinyl-CoA from propanoyl-CoA: step 1/3. Functionally, this is one of the 2 subunits of the biotin-dependent propionyl-CoA carboxylase (PCC), a mitochondrial enzyme involved in the catabolism of odd chain fatty acids, branched-chain amino acids isoleucine, threonine, methionine, and valine and other metabolites. Propionyl-CoA carboxylase catalyzes the carboxylation of propionyl-CoA/propanoyl-CoA to D-methylmalonyl-CoA/(S)-methylmalonyl-CoA. Within the holoenzyme, the alpha subunit catalyzes the ATP-dependent carboxylation of the biotin carried by the biotin carboxyl carrier (BCC) domain, while the beta subunit then transfers the carboxyl group from carboxylated biotin to propionyl-CoA. Propionyl-CoA carboxylase also significantly acts on butyryl-CoA/butanoyl-CoA, which is converted to ethylmalonyl-CoA/(2S)-ethylmalonyl-CoA. Other alternative minor substrates include (2E)-butenoyl-CoA/crotonoyl-CoA. This chain is Propionyl-CoA carboxylase beta chain, mitochondrial, found in Mus musculus (Mouse).